A 206-amino-acid chain; its full sequence is Outer-membrane lipoprotein LolB (206 aa).

An N-terminal signal peptide occupies residues 1 to 18 (MSLLKNLLAPCLALLLAG). Cys-19 carries N-palmitoyl cysteine lipidation. Cys-19 carries S-diacylglycerol cysteine lipidation.

The protein belongs to the LolB family. As to quaternary structure, monomer.

The protein resides in the cell outer membrane. Functionally, plays a critical role in the incorporation of lipoproteins in the outer membrane after they are released by the LolA protein. This Stutzerimonas stutzeri (strain A1501) (Pseudomonas stutzeri) protein is Outer-membrane lipoprotein LolB.